The following is a 335-amino-acid chain: Phospho-N-acetylmuramoyl-pentapeptide-transferase (335 aa).

The next 9 membrane-spanning stretches (helical) occupy residues 2–22 (PPLFCVLKAFFIGLVVSLILV), 55–75 (IPTAGGIIFVLSVVLSILLLL), 77–97 (CNLWSTWFLVGATLLWGALGW), 118–137 (FFIQNCLAIGTVLPIMIAYG), 153–173 (LPHCWLGYLFSFSIAVLAIVG), 193–213 (VIACLGMLIVTFAYGAPWAFI), 238–258 (IFMGDTGSLFLGGMLGICAVL), 263–283 (FMLLFMGGIFVLESLSVILQV), and 313–333 (VVRNFWIIEFLCVAIGIFAVF).

The protein belongs to the glycosyltransferase 4 family. MraY subfamily. Requires Mg(2+) as cofactor.

It is found in the cell inner membrane. The enzyme catalyses UDP-N-acetyl-alpha-D-muramoyl-L-alanyl-gamma-D-glutamyl-meso-2,6-diaminopimeloyl-D-alanyl-D-alanine + di-trans,octa-cis-undecaprenyl phosphate = di-trans,octa-cis-undecaprenyl diphospho-N-acetyl-alpha-D-muramoyl-L-alanyl-D-glutamyl-meso-2,6-diaminopimeloyl-D-alanyl-D-alanine + UMP. It participates in cell wall biogenesis; peptidoglycan biosynthesis. Its function is as follows. Catalyzes the initial step of the lipid cycle reactions in the biosynthesis of the cell wall peptidoglycan: transfers peptidoglycan precursor phospho-MurNAc-pentapeptide from UDP-MurNAc-pentapeptide onto the lipid carrier undecaprenyl phosphate, yielding undecaprenyl-pyrophosphoryl-MurNAc-pentapeptide, known as lipid I. The sequence is that of Phospho-N-acetylmuramoyl-pentapeptide-transferase from Chlamydia muridarum (strain MoPn / Nigg).